Consider the following 316-residue polypeptide: tRNA methyltransferase 10 homolog B (316 aa).

Positions 73–97 (EKIVAAKKSKRKQEKERRKANRAEN) form a coiled coil. The disordered stretch occupies residues 77-98 (AAKKSKRKQEKERRKANRAENP). The SAM-dependent MTase TRM10-type domain maps to 113-310 (TKDKLLEAKH…KGVSSGKGYI (198 aa)).

It belongs to the class IV-like SAM-binding methyltransferase superfamily. TRM10 family.

It carries out the reaction guanosine(9) in tRNA + S-adenosyl-L-methionine = N(1)-methylguanosine(9) in tRNA + S-adenosyl-L-homocysteine + H(+). S-adenosyl-L-methionine-dependent guanine N(1)-methyltransferase that catalyzes the formation of N(1)-methylguanine at position 9 (m1G9) in tRNAs. Probably not able to catalyze formation of N(1)-methyladenine at position 9 (m1A9) in tRNAs. In Homo sapiens (Human), this protein is tRNA methyltransferase 10 homolog B (TRMT10B).